The primary structure comprises 143 residues: Large ribosomal subunit protein uL16 (143 aa).

It belongs to the universal ribosomal protein uL16 family. Part of the 50S ribosomal subunit.

Functionally, binds 23S rRNA and is also seen to make contacts with the A and possibly P site tRNAs. The chain is Large ribosomal subunit protein uL16 from Tropheryma whipplei (strain TW08/27) (Whipple's bacillus).